Here is a 234-residue protein sequence, read N- to C-terminus: Large ribosomal subunit protein uL1 (234 aa).

This sequence belongs to the universal ribosomal protein uL1 family. In terms of assembly, part of the 50S ribosomal subunit.

In terms of biological role, binds directly to 23S rRNA. The L1 stalk is quite mobile in the ribosome, and is involved in E site tRNA release. Its function is as follows. Protein L1 is also a translational repressor protein, it controls the translation of the L11 operon by binding to its mRNA. In Campylobacter fetus subsp. fetus (strain 82-40), this protein is Large ribosomal subunit protein uL1.